Consider the following 92-residue polypeptide: Small ribosomal subunit protein uS19 (92 aa).

Belongs to the universal ribosomal protein uS19 family.

Functionally, protein S19 forms a complex with S13 that binds strongly to the 16S ribosomal RNA. The polypeptide is Small ribosomal subunit protein uS19 (Lysinibacillus sphaericus (strain C3-41)).